Here is a 145-residue protein sequence, read N- to C-terminus: Immunity protein CdiI (145 aa).

As to quaternary structure, interacts with cognate toxin fragment CdiA-CT.

Functionally, immunity protein component of a toxin-immunity protein module, which functions as a cellular contact-dependent growth inhibition (CDI) system. CDI modules allow bacteria to communicate with and inhibit the growth of closely related neighboring bacteria in a contact-dependent fashion. Protects cells against the 16S rRNase activity of CdiA-CT, its cognate toxin protein, but not against the toxic effects of a similar rRNase, non-cognate CdiA-CT from E.chrysanthemi strain EC16. The chain is Immunity protein CdiI from Enterobacter cloacae subsp. cloacae (strain ATCC 13047 / DSM 30054 / NBRC 13535 / NCTC 10005 / WDCM 00083 / NCDC 279-56).